The chain runs to 530 residues: Na(+)/H(+) antiporter NhaB (530 aa).

Helical transmembrane passes span 13–33 (FLGKAPDWYKIAILSFLVINP), 34–54 (LVFFFVDPFTAGWLLVVEFIF), 90–110 (LVANIEVLLLLVFMVAGIYFM), 121–141 (ILIGIKSKTALSVAFCFTAAF), 145–165 (FLDALTVIAVVISVAVGFYAI), 205–225 (LLIHAGVGTALGGVMTMVGEP), 241–261 (FIIRMLPITAPVFICGILTCI), 306–326 (GLIAVWLIVGLALHLAAVGLI), 327–347 (GLSVIILATAFTGVIEEHSMG), 351–371 (EEALPFTALLAVFFAVVAVII), 455–475 (GQAAFLFLLTSALAPLIQLSY), and 481–501 (MALPYTIVLALVGMFGIIFFL).

Belongs to the NhaB Na(+)/H(+) (TC 2.A.34) antiporter family.

The protein localises to the cell inner membrane. The enzyme catalyses 2 Na(+)(in) + 3 H(+)(out) = 2 Na(+)(out) + 3 H(+)(in). Its function is as follows. Na(+)/H(+) antiporter that extrudes sodium in exchange for external protons. The polypeptide is Na(+)/H(+) antiporter NhaB (Aliivibrio fischeri (strain MJ11) (Vibrio fischeri)).